Consider the following 156-residue polypeptide: uncharacterized protein (156 aa).

A run of 3 helical transmembrane segments spans residues 21-41 (GVLFSSFALLFMFFNSLAISL), 54-74 (TICSSLIPCRTLIFSLWIDFA), and 80-100 (SVLVCCFSASLPLVFFFWALF).

Its subcellular location is the membrane. This is an uncharacterized protein from Saccharomyces cerevisiae (strain ATCC 204508 / S288c) (Baker's yeast).